Reading from the N-terminus, the 361-residue chain is Spermidine/putrescine import ATP-binding protein PotA (361 aa).

An ABC transporter domain is found at 7–241 (IEVRNVSKRY…PQHRFVAQFI (235 aa)). Position 43 to 50 (43 to 50 (GPSGCGKT)) interacts with ATP.

It belongs to the ABC transporter superfamily. Spermidine/putrescine importer (TC 3.A.1.11.1) family. In terms of assembly, the complex is composed of two ATP-binding proteins (PotA), two transmembrane proteins (PotB and PotC) and a solute-binding protein (PotD).

The protein resides in the cell inner membrane. It carries out the reaction ATP + H2O + polyamine-[polyamine-binding protein]Side 1 = ADP + phosphate + polyamineSide 2 + [polyamine-binding protein]Side 1.. Its function is as follows. Part of the ABC transporter complex PotABCD involved in spermidine/putrescine import. Responsible for energy coupling to the transport system. The chain is Spermidine/putrescine import ATP-binding protein PotA from Pseudomonas fluorescens (strain Pf0-1).